Consider the following 139-residue polypeptide: uncharacterized protein (139 aa).

3 consecutive transmembrane segments (helical) span residues 19–39 (CIIF…FILG), 64–84 (IFNV…FNLF), and 89–109 (AITI…WILG).

It localises to the cell membrane. This is an uncharacterized protein from Methanocaldococcus jannaschii (strain ATCC 43067 / DSM 2661 / JAL-1 / JCM 10045 / NBRC 100440) (Methanococcus jannaschii).